We begin with the raw amino-acid sequence, 136 residues long: Succinate dehydrogenase 2 membrane subunit SdhC (136 aa).

The next 3 helical transmembrane spans lie at 32–52, 70–90, and 109–129; these read RISG…AAML, IVGL…LNGI, and LWII…VVGI. His85 is a binding site for heme.

Belongs to the cytochrome b560 family. As to quaternary structure, part of an enzyme complex containing four subunits: a flavoprotein (SdhA), an iron-sulfur protein (SdhB), plus two membrane-anchoring proteins (SdhC and SdhD). Heme is required as a cofactor.

It localises to the cell membrane. Functionally, membrane-anchoring subunit of succinate dehydrogenase 2 (Sdh2). Sdh2 may catalyze the two-electron oxidation of succinate to fumarate with a corresponding reduction of quinone to quinol under low oxygen conditions, when the primary aerobic succinate dehydrogenase (Sdh1) is inhibited. Sdh2 seems to be the generator of the proton motive force (PMF) under hypoxia. The protein is Succinate dehydrogenase 2 membrane subunit SdhC of Mycobacterium tuberculosis (strain ATCC 25618 / H37Rv).